Reading from the N-terminus, the 259-residue chain is Ubiquitin-conjugating enzyme E2 J2 (259 aa).

The Cytoplasmic segment spans residues methionine 1 to histidine 226. Residues threonine 12–glutamate 162 form the UBC core domain. Cysteine 94 functions as the Glycyl thioester intermediate in the catalytic mechanism. The chain crosses the membrane as a helical; Anchor for type IV membrane protein span at residues glycine 227–tyrosine 247. The Lumenal portion of the chain corresponds to threonine 248 to glutamate 259.

The protein belongs to the ubiquitin-conjugating enzyme family. Interacts with murid herpesvirus 4 protein K3 (mK3).

The protein localises to the endoplasmic reticulum membrane. It catalyses the reaction S-ubiquitinyl-[E1 ubiquitin-activating enzyme]-L-cysteine + [E2 ubiquitin-conjugating enzyme]-L-cysteine = [E1 ubiquitin-activating enzyme]-L-cysteine + S-ubiquitinyl-[E2 ubiquitin-conjugating enzyme]-L-cysteine.. It functions in the pathway protein modification; protein ubiquitination. Catalyzes the covalent attachment of ubiquitin to other proteins. Seems to function in the selective degradation of misfolded membrane proteins from the endoplasmic reticulum (ERAD). In cooperation with the GATOR2 complex, catalyzes 'Lys-6'-linked ubiquitination of NPRL2. In terms of biological role, in case of infection by the murid herpesvirus 4, its association with the viral E3 ligase K3 mediates ubiquitination of host surface class I (MHC-I) H-2D(b)/H2-D1 and H-2K(b)/H2-K1 molecules before they exit the endoplasmic reticulum, leading to their degradation by the ERAD system, thus blocking the immune detection of virus-infected cells. The complex formed with the murid herpesvirus 4 protein K3 mediates ubiquitination of lysine, as well as serine and threonine residues present in the cytoplasmic tail of surface class I molecules and promotes ubiquitination of hydroxylated serine or threonine residues via ester bonds instead of the classical isopeptide linkage. This chain is Ubiquitin-conjugating enzyme E2 J2 (Ube2j2), found in Mus musculus (Mouse).